The primary structure comprises 276 residues: Dermonecrotic toxin LlSicTox-alphaIV1i (276 aa).

Residue histidine 5 is part of the active site. The Mg(2+) site is built by glutamate 25 and aspartate 27. Histidine 41 functions as the Nucleophile in the catalytic mechanism. Cystine bridges form between cysteine 45/cysteine 51 and cysteine 47/cysteine 193. Aspartate 85 provides a ligand contact to Mg(2+).

Belongs to the arthropod phospholipase D family. Class II subfamily. It depends on Mg(2+) as a cofactor. In terms of tissue distribution, expressed by the venom gland.

Its subcellular location is the secreted. It carries out the reaction an N-(acyl)-sphingosylphosphocholine = an N-(acyl)-sphingosyl-1,3-cyclic phosphate + choline. The catalysed reaction is an N-(acyl)-sphingosylphosphoethanolamine = an N-(acyl)-sphingosyl-1,3-cyclic phosphate + ethanolamine. It catalyses the reaction a 1-acyl-sn-glycero-3-phosphocholine = a 1-acyl-sn-glycero-2,3-cyclic phosphate + choline. The enzyme catalyses a 1-acyl-sn-glycero-3-phosphoethanolamine = a 1-acyl-sn-glycero-2,3-cyclic phosphate + ethanolamine. Dermonecrotic toxins cleave the phosphodiester linkage between the phosphate and headgroup of certain phospholipids (sphingolipid and lysolipid substrates), forming an alcohol (often choline) and a cyclic phosphate. This toxin acts on sphingomyelin (SM). It may also act on ceramide phosphoethanolamine (CPE), lysophosphatidylcholine (LPC) and lysophosphatidylethanolamine (LPE), but not on lysophosphatidylserine (LPS), and lysophosphatidylglycerol (LPG). It acts by transphosphatidylation, releasing exclusively cyclic phosphate products as second products. Induces dermonecrosis, hemolysis, increased vascular permeability, edema, inflammatory response, and platelet aggregation. In Loxosceles laeta (South American recluse spider), this protein is Dermonecrotic toxin LlSicTox-alphaIV1i.